Consider the following 451-residue polypeptide: F-box/kelch-repeat protein At1g74510 (451 aa).

Positions 93–139 (SSPVTRLDQNALLNCLAHCSLSDFGSIASTNRTFRSLIKDSELYRLR) constitute an F-box domain. Kelch repeat units lie at residues 137–188 (RLRR…KESL), 193–236 (ELLV…SLGE), 237–284 (IAVI…FMDG), 286–333 (FYCI…DQAK), and 349–395 (AVVK…GMAF).

This Arabidopsis thaliana (Mouse-ear cress) protein is F-box/kelch-repeat protein At1g74510.